The chain runs to 744 residues: Probable methylmalonyl-CoA mutase, mitochondrial (744 aa).

A B12-binding domain is found at 605 to 737 (QPRIMVAKMG…EKLEANLPEA (133 aa)). Position 618 (His618) interacts with adenosylcob(III)alamin.

The protein belongs to the methylmalonyl-CoA mutase family. In terms of assembly, homodimer. It depends on adenosylcob(III)alamin as a cofactor.

The protein resides in the mitochondrion matrix. It catalyses the reaction (R)-methylmalonyl-CoA = succinyl-CoA. In terms of biological role, involved, in man, in the degradation of several amino acids, odd-chain fatty acids and cholesterol via propionyl-CoA to the tricarboxylic acid cycle. MCM has different functions in other species. The sequence is that of Probable methylmalonyl-CoA mutase, mitochondrial (mmcm-1) from Caenorhabditis elegans.